Here is a 350-residue protein sequence, read N- to C-terminus: tRNA N6-adenosine threonylcarbamoyltransferase (350 aa).

2 residues coordinate Fe cation: His-115 and His-119. Residues 137–141 (IISGG), Asp-170, Gly-183, and Asn-281 each bind substrate. Fe cation is bound at residue Asp-309.

It belongs to the KAE1 / TsaD family. The cofactor is Fe(2+).

Its subcellular location is the cytoplasm. The catalysed reaction is L-threonylcarbamoyladenylate + adenosine(37) in tRNA = N(6)-L-threonylcarbamoyladenosine(37) in tRNA + AMP + H(+). Functionally, required for the formation of a threonylcarbamoyl group on adenosine at position 37 (t(6)A37) in tRNAs that read codons beginning with adenine. Is involved in the transfer of the threonylcarbamoyl moiety of threonylcarbamoyl-AMP (TC-AMP) to the N6 group of A37, together with TsaE and TsaB. TsaD likely plays a direct catalytic role in this reaction. This Ehrlichia canis (strain Jake) protein is tRNA N6-adenosine threonylcarbamoyltransferase.